The primary structure comprises 706 residues: Elongation factor G (706 aa).

The tr-type G domain maps to 8-297 (ERVRNIGIAA…AVIDYLPAPT (290 aa)). Residues 17–24 (AHIDAGKT), 96–100 (DTPGH), and 150–153 (NKMD) each bind GTP.

The protein belongs to the TRAFAC class translation factor GTPase superfamily. Classic translation factor GTPase family. EF-G/EF-2 subfamily.

It is found in the cytoplasm. Catalyzes the GTP-dependent ribosomal translocation step during translation elongation. During this step, the ribosome changes from the pre-translocational (PRE) to the post-translocational (POST) state as the newly formed A-site-bound peptidyl-tRNA and P-site-bound deacylated tRNA move to the P and E sites, respectively. Catalyzes the coordinated movement of the two tRNA molecules, the mRNA and conformational changes in the ribosome. This is Elongation factor G from Cyanothece sp. (strain PCC 7425 / ATCC 29141).